The primary structure comprises 2004 residues: Alpha-2-macroglobulin homolog (2004 aa).

Residues 1-27 (MLCCLVFKGLLSMDLLRFLLISPFALI) form the signal peptide.

Belongs to the protease inhibitor I39 (alpha-2-macroglobulin) family. Bacterial alpha-2-macroglobulin subfamily.

This chain is Alpha-2-macroglobulin homolog, found in Yersinia pestis.